Reading from the N-terminus, the 409-residue chain is BRCA1-A complex subunit Abraxas 1 (409 aa).

Positions S7–L160 constitute an MPN domain. Residue S48 is modified to Phosphoserine. A coiled-coil region spans residues D206–A260. Over residues L362–A372 the composition is skewed to basic and acidic residues. A disordered region spans residues L362–F409. Over residues D373 to P388 the composition is skewed to polar residues. Phosphoserine occurs at positions 386 and 387. The residue at position 390 (T390) is a Phosphothreonine. Phosphoserine occurs at positions 404 and 406. The pSXXF motif signature appears at S406–F409.

This sequence belongs to the FAM175 family. Abraxas subfamily. As to quaternary structure, component of the ARISC complex, at least composed of UIMC1/RAP80, ABRAXAS1, BRCC3/BRCC36, BABAM2 and BABAM1/NBA1. Component of the BRCA1-A complex, at least composed of BRCA1, BARD1, UIMC1/RAP80, ABRAXAS1, BRCC3/BRCC36, BABAM2 and BABAM1/NBA1. In the complex, interacts directly with UIMC1/RAP80, BRCC3/BRCC36 and BABAM2. Interacts directly (when phosphorylated at Ser-406) with BRCA1. Homodimer. The homodimer interacts directly (when phosphorylated at Ser-404 and Ser-406) with two BRCA1 chains, giving rise to a heterotetramer. Binds polyubiquitin. In terms of processing, phosphorylation of Ser-406 of the pSXXF motif by ATM or ATR constitutes a specific recognition motif for the BRCT domain of BRCA1. Ionizing radiation promotes rapid phosphorylation at Ser-404 and Ser-406 by ATM; this promotes recruitment of BRCA1 to sites of DNA damage.

It is found in the nucleus. Functionally, involved in DNA damage response and double-strand break (DSB) repair. Component of the BRCA1-A complex, acting as a central scaffold protein that assembles the various components of the complex and mediates the recruitment of BRCA1. The BRCA1-A complex specifically recognizes 'Lys-63'-linked ubiquitinated histones H2A and H2AX at DNA lesion sites, leading to target the BRCA1-BARD1 heterodimer to sites of DNA damage at DSBs. This complex also possesses deubiquitinase activity that specifically removes 'Lys-63'-linked ubiquitin on histones H2A and H2AX. In Homo sapiens (Human), this protein is BRCA1-A complex subunit Abraxas 1.